The following is a 409-amino-acid chain: NADH-quinone oxidoreductase subunit D (409 aa).

It belongs to the complex I 49 kDa subunit family. In terms of assembly, NDH-1 is composed of 14 different subunits. Subunits NuoB, C, D, E, F, and G constitute the peripheral sector of the complex.

Its subcellular location is the cell inner membrane. The enzyme catalyses a quinone + NADH + 5 H(+)(in) = a quinol + NAD(+) + 4 H(+)(out). Functionally, NDH-1 shuttles electrons from NADH, via FMN and iron-sulfur (Fe-S) centers, to quinones in the respiratory chain. The immediate electron acceptor for the enzyme in this species is believed to be ubiquinone. Couples the redox reaction to proton translocation (for every two electrons transferred, four hydrogen ions are translocated across the cytoplasmic membrane), and thus conserves the redox energy in a proton gradient. The protein is NADH-quinone oxidoreductase subunit D (nuoD) of Thermus thermophilus (strain ATCC BAA-163 / DSM 7039 / HB27).